We begin with the raw amino-acid sequence, 312 residues long: UDP-N-acetylenolpyruvoylglucosamine reductase (312 aa).

Residues 24–206 enclose the FAD-binding PCMH-type domain; it reads GIGGPADLFA…SADILKVRNE (183 aa). R166 is an active-site residue. The active-site Proton donor is S217. Residue E307 is part of the active site.

Belongs to the MurB family. FAD serves as cofactor.

The protein resides in the cytoplasm. The catalysed reaction is UDP-N-acetyl-alpha-D-muramate + NADP(+) = UDP-N-acetyl-3-O-(1-carboxyvinyl)-alpha-D-glucosamine + NADPH + H(+). Its pathway is cell wall biogenesis; peptidoglycan biosynthesis. Cell wall formation. This is UDP-N-acetylenolpyruvoylglucosamine reductase from Solibacter usitatus (strain Ellin6076).